A 202-amino-acid polypeptide reads, in one-letter code: Na(+)-translocating NADH-quinone reductase subunit E (202 aa).

Transmembrane regions (helical) follow at residues 11-31 (AVFI…FLAV), 39-59 (FGLG…NNLI), 81-101 (FLKF…LEMA), 114-134 (GIFL…AFMV), 144-164 (VVFG…LAAV), and 180-200 (LGIT…FSGV).

Belongs to the NqrDE/RnfAE family. In terms of assembly, composed of six subunits; NqrA, NqrB, NqrC, NqrD, NqrE and NqrF.

Its subcellular location is the cell inner membrane. The catalysed reaction is a ubiquinone + n Na(+)(in) + NADH + H(+) = a ubiquinol + n Na(+)(out) + NAD(+). In terms of biological role, NQR complex catalyzes the reduction of ubiquinone-1 to ubiquinol by two successive reactions, coupled with the transport of Na(+) ions from the cytoplasm to the periplasm. NqrA to NqrE are probably involved in the second step, the conversion of ubisemiquinone to ubiquinol. This chain is Na(+)-translocating NADH-quinone reductase subunit E, found in Idiomarina loihiensis (strain ATCC BAA-735 / DSM 15497 / L2-TR).